The following is a 390-amino-acid chain: Mannitol-1-phosphate 5-dehydrogenase (390 aa).

7–18 (AVHFGGGNIGRG) provides a ligand contact to NAD(+). Lys216 is a catalytic residue.

Belongs to the mannitol dehydrogenase family. In terms of assembly, monomer.

The catalysed reaction is D-mannitol 1-phosphate + NAD(+) = beta-D-fructose 6-phosphate + NADH + H(+). Catalyzes the NAD(H)-dependent interconversion of D-fructose 6-phosphate and D-mannitol 1-phosphate in the mannitol metabolic pathway. Has a strong preference for NADH over NADPH. The polypeptide is Mannitol-1-phosphate 5-dehydrogenase (Alternaria alternata (Alternaria rot fungus)).